The sequence spans 203 residues: MKREGVLYIISAPSGAGKTTLCKEIIDIFPHLRHSVSYTTRQPRAGEVHGKDYYFISMDEFRSMVDKGEFAEWAEVHGNCYGTSIRTLEECRITGIDLILDIDIQGARQLKERYEGGVYIFILPPSYEELRRRLNGRSSDSDDVISRRIDAAAGEIRESRWYDYIIVNDQFSRAVEELKSVVVAERCRTFRVLETVTERFDMG.

The 179-residue stretch at 5–183 folds into the Guanylate kinase-like domain; that stretch reads GVLYIISAPS…AVEELKSVVV (179 aa). 12–19 provides a ligand contact to ATP; that stretch reads APSGAGKT.

It belongs to the guanylate kinase family.

Its subcellular location is the cytoplasm. It catalyses the reaction GMP + ATP = GDP + ADP. In terms of biological role, essential for recycling GMP and indirectly, cGMP. This chain is Guanylate kinase, found in Geobacter metallireducens (strain ATCC 53774 / DSM 7210 / GS-15).